The sequence spans 475 residues: Aspartyl/glutamyl-tRNA(Asn/Gln) amidotransferase subunit B (475 aa).

This sequence belongs to the GatB/GatE family. GatB subfamily. In terms of assembly, heterotrimer of A, B and C subunits.

The catalysed reaction is L-glutamyl-tRNA(Gln) + L-glutamine + ATP + H2O = L-glutaminyl-tRNA(Gln) + L-glutamate + ADP + phosphate + H(+). It carries out the reaction L-aspartyl-tRNA(Asn) + L-glutamine + ATP + H2O = L-asparaginyl-tRNA(Asn) + L-glutamate + ADP + phosphate + 2 H(+). Its function is as follows. Allows the formation of correctly charged Asn-tRNA(Asn) or Gln-tRNA(Gln) through the transamidation of misacylated Asp-tRNA(Asn) or Glu-tRNA(Gln) in organisms which lack either or both of asparaginyl-tRNA or glutaminyl-tRNA synthetases. The reaction takes place in the presence of glutamine and ATP through an activated phospho-Asp-tRNA(Asn) or phospho-Glu-tRNA(Gln). The chain is Aspartyl/glutamyl-tRNA(Asn/Gln) amidotransferase subunit B from Bacillus cereus (strain ZK / E33L).